Consider the following 179-residue polypeptide: Large ribosomal subunit protein uL5 (179 aa).

Belongs to the universal ribosomal protein uL5 family. In terms of assembly, part of the 50S ribosomal subunit; part of the 5S rRNA/L5/L18/L25 subcomplex. Contacts the 5S rRNA and the P site tRNA. Forms a bridge to the 30S subunit in the 70S ribosome.

Its function is as follows. This is one of the proteins that bind and probably mediate the attachment of the 5S RNA into the large ribosomal subunit, where it forms part of the central protuberance. In the 70S ribosome it contacts protein S13 of the 30S subunit (bridge B1b), connecting the 2 subunits; this bridge is implicated in subunit movement. Contacts the P site tRNA; the 5S rRNA and some of its associated proteins might help stabilize positioning of ribosome-bound tRNAs. The protein is Large ribosomal subunit protein uL5 of Haemophilus influenzae (strain 86-028NP).